The sequence spans 214 residues: Large ribosomal subunit protein uL16 (214 aa).

Citrulline is present on R32. K175 participates in a covalent cross-link: Glycyl lysine isopeptide (Lys-Gly) (interchain with G-Cter in SUMO2). K188 participates in a covalent cross-link: Glycyl lysine isopeptide (Lys-Gly) (interchain with G-Cter in ubiquitin).

Belongs to the universal ribosomal protein uL16 family. Component of the large ribosomal subunit. Mature ribosomes consist of a small (40S) and a large (60S) subunit. The 40S subunit contains about 33 different proteins and 1 molecule of RNA (18S). The 60S subunit contains about 49 different proteins and 3 molecules of RNA (28S, 5.8S and 5S). In terms of processing, citrullinated by PADI4. Post-translationally, ufmylated by UFL1.

It localises to the cytoplasm. In terms of biological role, component of the large ribosomal subunit. Plays a role in the formation of actively translating ribosomes. May play a role in the embryonic brain development. The polypeptide is Large ribosomal subunit protein uL16 (Homo sapiens (Human)).